The following is a 74-amino-acid chain: Protein kish-B (74 aa).

The N-terminal stretch at 1-22 (MTNVYSLDGILVFGLLFVCTCA) is a signal peptide. Residues 23–52 (YFKKVPRLKTWLLSEKKGVWGVFYKAAVIG) lie on the Extracellular side of the membrane. A helical membrane pass occupies residues 53–73 (TRLHAAVAIACVVMAFYVLFI). A topological domain (cytoplasmic) is located at residue Lys74.

Belongs to the KISH family.

Its subcellular location is the golgi apparatus membrane. Involved in the early part of the secretory pathway. This is Protein kish-B (TMEM167B) from Homo sapiens (Human).